A 436-amino-acid chain; its full sequence is 3-ketoacyl-CoA thiolase (436 aa).

Cys99 acts as the Acyl-thioester intermediate in catalysis. Residues His392 and Cys422 each act as proton acceptor in the active site.

It belongs to the thiolase-like superfamily. Thiolase family. In terms of assembly, heterotetramer of two alpha chains (FadJ) and two beta chains (FadI).

It is found in the cytoplasm. It carries out the reaction an acyl-CoA + acetyl-CoA = a 3-oxoacyl-CoA + CoA. It functions in the pathway lipid metabolism; fatty acid beta-oxidation. Its function is as follows. Catalyzes the final step of fatty acid oxidation in which acetyl-CoA is released and the CoA ester of a fatty acid two carbons shorter is formed. This is 3-ketoacyl-CoA thiolase from Salmonella heidelberg (strain SL476).